Reading from the N-terminus, the 29-residue chain is Cytochrome b6-f complex subunit 8 (29 aa).

Residues 3–23 (IVSLAWAALMIVFTFSLSLVV) traverse the membrane as a helical segment.

It belongs to the PetN family. The 4 large subunits of the cytochrome b6-f complex are cytochrome b6, subunit IV (17 kDa polypeptide, PetD), cytochrome f and the Rieske protein, while the 4 small subunits are PetG, PetL, PetM and PetN. The complex functions as a dimer.

It localises to the plastid membrane. Component of the cytochrome b6-f complex, which mediates electron transfer between photosystem II (PSII) and photosystem I (PSI), cyclic electron flow around PSI, and state transitions. The polypeptide is Cytochrome b6-f complex subunit 8 (Cuscuta exaltata (Tall dodder)).